The sequence spans 222 residues: Protein GrpE (222 aa).

Residues Met-1–Gly-82 form a disordered region. Residues Ser-20–Asp-71 are compositionally biased toward low complexity.

Belongs to the GrpE family. In terms of assembly, homodimer.

The protein resides in the cytoplasm. Its function is as follows. Participates actively in the response to hyperosmotic and heat shock by preventing the aggregation of stress-denatured proteins, in association with DnaK and GrpE. It is the nucleotide exchange factor for DnaK and may function as a thermosensor. Unfolded proteins bind initially to DnaJ; upon interaction with the DnaJ-bound protein, DnaK hydrolyzes its bound ATP, resulting in the formation of a stable complex. GrpE releases ADP from DnaK; ATP binding to DnaK triggers the release of the substrate protein, thus completing the reaction cycle. Several rounds of ATP-dependent interactions between DnaJ, DnaK and GrpE are required for fully efficient folding. This Bifidobacterium adolescentis (strain ATCC 15703 / DSM 20083 / NCTC 11814 / E194a) protein is Protein GrpE.